The primary structure comprises 490 residues: MIPVVALVGRPNVGKSTLFNRLTRTRDALVADFPGLTRDRKYGRAHLAGYEFIVVDTGGIDGTEEGIETRMAEQSLAAIEEADVVLFLTDARAGLTAADLAIAQHLRSREKTTFVVANKVDGIDADSACAEFWSLGLGEVYQMAAAQGRGVTNMIEYSLAPYAEAMGIVKQEDGDDDEEEREYTEEQAEAEQKRLQDLPIKLAIIGKPNVGKSTLTNRILGEERVVVYDEPGTTRDSIYIPMERQGREYVLIDTAGVRRRSKVHETVEKFSVIKTLKAVEDSNVVLLVIDAREGIAEQDLGLLGFVLNAGRALVIAINKWDGIDQNIKDRVKTELDRRLGFIDFARIHFISALHGTGVGHLFESIEEAYDSATRRVSTSMLTRIMQMSQDDHQPPLVNGRRVKLKYAHAGGYNPPIVVVHGNQVKKLPDSYKRYMMNYFRRSLKVIGTPIQLRFQEGGNPFEGMNSKKLTVSQERRRKRMVGHIRDKNKD.

2 consecutive EngA-type G domains span residues 3–166 (PVVA…AEAM) and 200–373 (IKLA…DSAT). GTP-binding positions include 9–16 (GRPNVGKS), 56–60 (DTGGI), 118–121 (NKVD), 206–213 (GKPNVGKS), 253–257 (DTAGV), and 318–321 (NKWD). One can recognise a KH-like domain in the interval 374–458 (RRVSTSMLTR…PIQLRFQEGG (85 aa)). The tract at residues 470 to 490 (TVSQERRRKRMVGHIRDKNKD) is disordered.

Belongs to the TRAFAC class TrmE-Era-EngA-EngB-Septin-like GTPase superfamily. EngA (Der) GTPase family. Associates with the 50S ribosomal subunit.

GTPase that plays an essential role in the late steps of ribosome biogenesis. The protein is GTPase Der of Shewanella pealeana (strain ATCC 700345 / ANG-SQ1).